The chain runs to 420 residues: uncharacterized protein (420 aa).

The protein belongs to the Rv1128c/1148c/1588c/1702c/1945/3466 family.

This is an uncharacterized protein from Mycobacterium tuberculosis (strain CDC 1551 / Oshkosh).